We begin with the raw amino-acid sequence, 117 residues long: Large ribosomal subunit protein uL18 (117 aa).

It belongs to the universal ribosomal protein uL18 family. As to quaternary structure, part of the 50S ribosomal subunit; part of the 5S rRNA/L5/L18/L25 subcomplex. Contacts the 5S and 23S rRNAs.

In terms of biological role, this is one of the proteins that bind and probably mediate the attachment of the 5S RNA into the large ribosomal subunit, where it forms part of the central protuberance. The chain is Large ribosomal subunit protein uL18 from Thiobacillus denitrificans (strain ATCC 25259 / T1).